Consider the following 204-residue polypeptide: Outer-membrane lipoprotein carrier protein (204 aa).

An N-terminal signal peptide occupies residues 1–21; sequence MKKYLNLTALLLVGISNVTWA.

It belongs to the LolA family. In terms of assembly, monomer.

It is found in the periplasm. In terms of biological role, participates in the translocation of lipoproteins from the inner membrane to the outer membrane. Only forms a complex with a lipoprotein if the residue after the N-terminal Cys is not an aspartate (The Asp acts as a targeting signal to indicate that the lipoprotein should stay in the inner membrane). This Histophilus somni (strain 129Pt) (Haemophilus somnus) protein is Outer-membrane lipoprotein carrier protein.